Consider the following 983-residue polypeptide: MTLQRGLPLLLQQYTALFKKNLLLSWRSKRATFLQLFASFFFILLIFCIQAAMEKSFASSTALKTVTDPTALISPPIPPCEDKFFVNLPCYDFVWSGNRSSKVTQIVNAIMKNNPGRSIPIEKVRSFVDPEAVDTWLMANPLLVPGALHFIERNATVISYGIQTNSTPEMNRGRFEDPTFKFQIPLQIAAEREIARSLIGDPNFNWVVGFKEFPHPTIEAIVALDTIGPTFFLAVAMFGFVLQISSLITEKELKLRQAMTMMGVFDTAYWLSWLTWEGILTAISALLTVLFGMMFQFDFFLKNSFPVVFLLFMLFQFNLIGLAFMLSAFISKSTSATTVGFFVFLVGFVTQLATSSGFPYAKKYSRMIRALWSLFPPNTFSQGLKLLADATSTPQDPGISWSKRAECGPNDDTGCVLTINDIYLWLLGTFFLWFVLALYFDNITPNASGVRKSIFYFLKPGYWTGKGGNRVEEGGICSCIGSVPPVDHITPDDEDVLEEETLVKQHSMEGLVDPNVAVQIRGLAKTYPGTTKFGCCKCKKTSPFHALKGLWMNIAKDQLFCLLGPNGAGKTTTINCLTGLFPVTGGDALIYGNSIRSSVGMSNIRKMIGVCPQFDILWDALSGEEHLKLFASIKGLPPSSINSMVEKSLAEVKLTEAGKIRAGSYSGGMKRRLSVAVSLIGDPKLVFLDEPTTGMDPITRRHVWDIIQETKKGRAIILTTHSMEEADILSDRIGIMAKGRLRCIGTSIRLKSRFGTGFIANISFVESNNHNGEAGSDSREPVKKFFKDHLKVKPIEENKAFMTFVIPHDKENLLTSFFAELQDREEEFGISDIQLGLATLEEVFLNIARKAELESAAVDGTMVTLDLTSGSSVEIPVGARFIGIPGTETAENPRGVMVEVYWQQDESGSLCISGHSTEMPIPENIPVTDPVAPGHGGVNLLGRRGRRQVQGIVIDPEFATFTRSGSTSSRRFSRSGSSRRFSS.

6 helical membrane-spanning segments follow: residues 33 to 53 (FLQL…QAAM), 221 to 241 (IVAL…FGFV), 279 to 299 (ILTA…QFDF), 305 to 325 (FPVV…LAFM), 339 to 359 (VGFF…SGFP), and 416 to 436 (VLTI…WFVL). The region spanning 518-763 (VQIRGLAKTY…FGTGFIANIS (246 aa)) is the ABC transporter domain. 564-571 (GPNGAGKT) lines the ATP pocket. A disordered region spans residues 963–983 (RSGSTSSRRFSRSGSSRRFSS).

It belongs to the ABC transporter superfamily. ABCA family. CPR flippase (TC 3.A.1.211) subfamily.

The protein resides in the membrane. This chain is ABC transporter A family member 2 (ABCA2), found in Arabidopsis thaliana (Mouse-ear cress).